The chain runs to 200 residues: NADH-quinone oxidoreductase subunit C (200 aa).

It belongs to the complex I 30 kDa subunit family. In terms of assembly, NDH-1 is composed of 14 different subunits. Subunits NuoB, C, D, E, F, and G constitute the peripheral sector of the complex.

The protein localises to the cell inner membrane. It carries out the reaction a quinone + NADH + 5 H(+)(in) = a quinol + NAD(+) + 4 H(+)(out). Functionally, NDH-1 shuttles electrons from NADH, via FMN and iron-sulfur (Fe-S) centers, to quinones in the respiratory chain. The immediate electron acceptor for the enzyme in this species is believed to be ubiquinone. Couples the redox reaction to proton translocation (for every two electrons transferred, four hydrogen ions are translocated across the cytoplasmic membrane), and thus conserves the redox energy in a proton gradient. The sequence is that of NADH-quinone oxidoreductase subunit C from Burkholderia ambifaria (strain ATCC BAA-244 / DSM 16087 / CCUG 44356 / LMG 19182 / AMMD) (Burkholderia cepacia (strain AMMD)).